Consider the following 452-residue polypeptide: Phosphoglucosamine mutase (452 aa).

The active-site Phosphoserine intermediate is the Ser108. Ser108, Asp247, Asp249, and Asp251 together coordinate Mg(2+). Ser108 carries the post-translational modification Phosphoserine.

Belongs to the phosphohexose mutase family. Requires Mg(2+) as cofactor. Activated by phosphorylation.

The enzyme catalyses alpha-D-glucosamine 1-phosphate = D-glucosamine 6-phosphate. Functionally, catalyzes the conversion of glucosamine-6-phosphate to glucosamine-1-phosphate. This Paraburkholderia phytofirmans (strain DSM 17436 / LMG 22146 / PsJN) (Burkholderia phytofirmans) protein is Phosphoglucosamine mutase.